The sequence spans 152 residues: UPF0266 membrane protein YobD (152 aa).

A run of 3 helical transmembrane segments spans residues 6 to 26, 45 to 65, and 67 to 87; these read LVLILFIAALLAYALYDQFIM, VDSVIFVGLVAILIYNNVTSH, and AQMTTWLLSALALMGFYIFWI.

It belongs to the UPF0266 family.

The protein resides in the cell inner membrane. This Salmonella agona (strain SL483) protein is UPF0266 membrane protein YobD.